The chain runs to 430 residues: MNDLLPAAAAPAGARALPLRHADPEIWRAVDAERQRQMHSIELIASENFVSQAVLDAQGSVMTNKYAEGYPGRRYYGGCRHVDVAERAAIERARRLFGCEYANVQPHSGSQANQAVYLALLAPGDRILGLDLKAGGHLTHGARVNLSGKWFEALSYGVDPVSHRIDMDEVERTARRERPRLIIAGGSAYARVPDFARFRAIADATGALFVADMAHYAGLVAGGAFPSPVPFAHVTTTTTHKTLRGPRGGMILTDDADIARRIDAAVFPGLQGGPLMHVIAAKAVALGEALQPGFRAYARAVIDNARALCARLAEGGLSIVSGGTDCHLGVVDLRPWGLAGNAAERALEEAGITVNKNAVPGDAASPAVTSGIRVGSAACTSRGMGPAEFRQIGDLVLAVLGGLRDGGQAGGRDAVPARAAELSRRFPLPY.

(6S)-5,6,7,8-tetrahydrofolate is bound by residues Leu-132 and 136-138; that span reads GHL. Lys-241 carries the post-translational modification N6-(pyridoxal phosphate)lysine.

It belongs to the SHMT family. As to quaternary structure, homodimer. Pyridoxal 5'-phosphate is required as a cofactor.

Its subcellular location is the cytoplasm. It carries out the reaction (6R)-5,10-methylene-5,6,7,8-tetrahydrofolate + glycine + H2O = (6S)-5,6,7,8-tetrahydrofolate + L-serine. It participates in one-carbon metabolism; tetrahydrofolate interconversion. It functions in the pathway amino-acid biosynthesis; glycine biosynthesis; glycine from L-serine: step 1/1. Its function is as follows. Catalyzes the reversible interconversion of serine and glycine with tetrahydrofolate (THF) serving as the one-carbon carrier. This reaction serves as the major source of one-carbon groups required for the biosynthesis of purines, thymidylate, methionine, and other important biomolecules. Also exhibits THF-independent aldolase activity toward beta-hydroxyamino acids, producing glycine and aldehydes, via a retro-aldol mechanism. This chain is Serine hydroxymethyltransferase 1, found in Bordetella parapertussis (strain 12822 / ATCC BAA-587 / NCTC 13253).